A 138-amino-acid chain; its full sequence is MLQPKRTKFRKAFKGQINGQSKGGFTLSFGQFGLKALEPERVTARQIEATRRAITREMKRQGKVWIRVFPDVPVTAKPIEVRMGKGKGGVDRWVARVAPGRILFEIDGVPEDIARQALALGAAKLPIKTKVVKRIEGI.

This sequence belongs to the universal ribosomal protein uL16 family. Part of the 50S ribosomal subunit.

Functionally, binds 23S rRNA and is also seen to make contacts with the A and possibly P site tRNAs. In Hyphomonas neptunium (strain ATCC 15444), this protein is Large ribosomal subunit protein uL16.